Reading from the N-terminus, the 536-residue chain is Cytochrome P450 monooxygenase pbrC (536 aa).

The helical transmembrane segment at 20 to 39 threads the bilayer; the sequence is VMLPALVGFAFLIYQAFFAI. C479 provides a ligand contact to heme.

This sequence belongs to the cytochrome P450 family. Heme is required as a cofactor.

Its subcellular location is the membrane. Its pathway is secondary metabolite biosynthesis; terpenoid biosynthesis. Cytochrome P450 monooxygenase; part of the gene cluster that mediates the biosynthesis of the sesquiterpenoid aspterric acid (AA), an inhibitor of dihydroxy-acid dehydratase (DHAD) effective as an herbicide. PbrC catalyzes the third and last step within the pathway and converts the alpha-epoxy carboxylate intermediate produced by the cytochrome P450 monooxygenase pbrB from (-)daucane into the tricyclic aspterric acid. The chain is Cytochrome P450 monooxygenase pbrC from Penicillium brasilianum.